Reading from the N-terminus, the 248-residue chain is Triosephosphate isomerase (248 aa).

Asn-9–Lys-11 is a substrate binding site. The active-site Electrophile is the His-94. Glu-166 serves as the catalytic Proton acceptor. Substrate is bound by residues Gly-172, Ser-211, and Gly-232–Gly-233.

Belongs to the triosephosphate isomerase family. Homodimer.

Its subcellular location is the cytoplasm. The enzyme catalyses D-glyceraldehyde 3-phosphate = dihydroxyacetone phosphate. The protein operates within carbohydrate biosynthesis; gluconeogenesis. It participates in carbohydrate degradation; glycolysis; D-glyceraldehyde 3-phosphate from glycerone phosphate: step 1/1. Functionally, involved in the gluconeogenesis. Catalyzes stereospecifically the conversion of dihydroxyacetone phosphate (DHAP) to D-glyceraldehyde-3-phosphate (G3P). This is Triosephosphate isomerase from Ruthia magnifica subsp. Calyptogena magnifica.